We begin with the raw amino-acid sequence, 374 residues long: F-box/LRR-repeat protein 8 (374 aa).

Residues 2–48 (AEPGEQLPEEVLALIFRHLPLPDRAAAARVCRAWAAAATCSAVWHDT) enclose the F-box domain.

As to quaternary structure, directly interacts with SKP1 and CUL1.

In terms of biological role, substrate-recognition component of the SCF (SKP1-CUL1-F-box protein)-type E3 ubiquitin ligase complex. The protein is F-box/LRR-repeat protein 8 (FBXL8) of Bos taurus (Bovine).